A 389-amino-acid chain; its full sequence is Carbamoyl phosphate synthase small chain (389 aa).

A CPSase region spans residues methionine 1–aspartate 197. L-glutamine contacts are provided by serine 51, glycine 249, and glycine 251. The region spanning histidine 201–valine 387 is the Glutamine amidotransferase type-1 domain. The Nucleophile role is filled by cysteine 276. L-glutamine-binding residues include leucine 277, glutamine 280, asparagine 318, glycine 320, and phenylalanine 321. Residues histidine 360 and glutamate 362 contribute to the active site.

It belongs to the CarA family. As to quaternary structure, composed of two chains; the small (or glutamine) chain promotes the hydrolysis of glutamine to ammonia, which is used by the large (or ammonia) chain to synthesize carbamoyl phosphate. Tetramer of heterodimers (alpha,beta)4.

The enzyme catalyses hydrogencarbonate + L-glutamine + 2 ATP + H2O = carbamoyl phosphate + L-glutamate + 2 ADP + phosphate + 2 H(+). It carries out the reaction L-glutamine + H2O = L-glutamate + NH4(+). Its pathway is amino-acid biosynthesis; L-arginine biosynthesis; carbamoyl phosphate from bicarbonate: step 1/1. It functions in the pathway pyrimidine metabolism; UMP biosynthesis via de novo pathway; (S)-dihydroorotate from bicarbonate: step 1/3. Its function is as follows. Small subunit of the glutamine-dependent carbamoyl phosphate synthetase (CPSase). CPSase catalyzes the formation of carbamoyl phosphate from the ammonia moiety of glutamine, carbonate, and phosphate donated by ATP, constituting the first step of 2 biosynthetic pathways, one leading to arginine and/or urea and the other to pyrimidine nucleotides. The small subunit (glutamine amidotransferase) binds and cleaves glutamine to supply the large subunit with the substrate ammonia. The sequence is that of Carbamoyl phosphate synthase small chain from Rhodopirellula baltica (strain DSM 10527 / NCIMB 13988 / SH1).